A 221-amino-acid chain; its full sequence is Serine/arginine-rich splicing factor 9 (221 aa).

2 RRM domains span residues 14-89 and 111-187; these read GRIY…FPRT and FRVL…PERS. Lys-36 is covalently cross-linked (Glycyl lysine isopeptide (Lys-Gly) (interchain with G-Cter in SUMO2)). The interval 188 to 200 is interaction with SAFB1; that stretch reads TSYGYSRSRSGSR. At Ser-189 the chain carries Phosphoserine. Residues 189 to 198 are compositionally biased toward low complexity; sequence SYGYSRSRSG. Residues 189–221 form a disordered region; it reads SYGYSRSRSGSRGRDSPYQSRGSPHYFSPFRPY. Tyr-192 carries the post-translational modification Phosphotyrosine. Phosphoserine occurs at positions 193, 195, 204, 208, and 211. Phosphotyrosine is present on Tyr-214. Position 216 is a phosphoserine (Ser-216).

The protein belongs to the splicing factor SR family. As to quaternary structure, interacts with KHDRBS3. Interacts with HABP4. Interacts with NOL3/ARC/NOP30. Interacts with NSEP1/YB-1/YB1. Interacts with SAFB/SAFB1. Interacts with SRSF6/SFRS6. Interacts with TRA2B/SFRS10. Interacts with C1QBP. May also interact with DUSP11/PIR1. Post-translationally, extensively phosphorylated on serine residues in the RS domain. In terms of tissue distribution, expressed at high levels in the heart, kidney, pancreas and placenta, and at lower levels in the brain, liver, lung and skeletal muscle.

It is found in the nucleus. Plays a role in constitutive splicing and can modulate the selection of alternative splice sites. Represses the splicing of MAPT/Tau exon 10. The protein is Serine/arginine-rich splicing factor 9 (SRSF9) of Homo sapiens (Human).